A 25-amino-acid polypeptide reads, in one-letter code: RGSNLTSLPLQNVIDLFYVGNITIG.

2 N-linked (GlcNAc...) asparagine glycosylation sites follow: N4 and N21.

The protein belongs to the peptidase A1 family. Post-translationally, N-glycosylated. Expressed in chorionic epithelium (trophectoderm).

It is found in the secreted. The protein resides in the extracellular space. In Bison bison (American bison), this protein is Pregnancy-associated glycoprotein 72.